The chain runs to 414 residues: L-cysteine:1D-myo-inositol 2-amino-2-deoxy-alpha-D-glucopyranoside ligase (414 aa).

Residue Cys-43 coordinates Zn(2+). L-cysteinyl-5'-AMP-binding positions include 43–46 (CGIT), Thr-58, and 81–83 (NVT). The short motif at 45–55 (ITPYDATHLGH) is the 'HIGH' region element. Positions 187 to 192 (ERGGDP) match the 'ERGGDP' region motif. Trp-227 provides a ligand contact to L-cysteinyl-5'-AMP. Residue Cys-231 coordinates Zn(2+). Position 249–251 (249–251 (GSD)) interacts with L-cysteinyl-5'-AMP. His-256 serves as a coordination point for Zn(2+). Ile-283 contacts L-cysteinyl-5'-AMP. Positions 289 to 293 (KMSKS) match the 'KMSKS' region motif.

It belongs to the class-I aminoacyl-tRNA synthetase family. MshC subfamily. As to quaternary structure, monomer. It depends on Zn(2+) as a cofactor.

The enzyme catalyses 1D-myo-inositol 2-amino-2-deoxy-alpha-D-glucopyranoside + L-cysteine + ATP = 1D-myo-inositol 2-(L-cysteinylamino)-2-deoxy-alpha-D-glucopyranoside + AMP + diphosphate + H(+). Catalyzes the ATP-dependent condensation of GlcN-Ins and L-cysteine to form L-Cys-GlcN-Ins. The chain is L-cysteine:1D-myo-inositol 2-amino-2-deoxy-alpha-D-glucopyranoside ligase from Tsukamurella paurometabola (strain ATCC 8368 / DSM 20162 / CCUG 35730 / CIP 100753 / JCM 10117 / KCTC 9821 / NBRC 16120 / NCIMB 702349 / NCTC 13040) (Corynebacterium paurometabolum).